A 285-amino-acid chain; its full sequence is UPF0354 protein SA1564 (285 aa).

This sequence belongs to the UPF0354 family.

The sequence is that of UPF0354 protein SA1564 from Staphylococcus aureus (strain N315).